The following is a 96-amino-acid chain: Large ribosomal subunit protein bL27 (96 aa).

Positions 1–9 are excised as a propeptide; it reads MLRLDLQFF. Residues 14–36 form a disordered region; that stretch reads GVGSTKNGRDSQSKRLGAKRADG.

Belongs to the bacterial ribosomal protein bL27 family. In terms of processing, the N-terminus is cleaved by ribosomal processing cysteine protease Prp.

This Bacillus anthracis (strain A0248) protein is Large ribosomal subunit protein bL27.